Reading from the N-terminus, the 33-residue chain is Photosystem II reaction center protein Psb30 (33 aa).

A helical transmembrane segment spans residues 5-25 (LIGQLVTVALVVGAGPIIIGA).

The protein belongs to the Psb30/Ycf12 family. As to quaternary structure, PSII is composed of 1 copy each of membrane proteins PsbA, PsbB, PsbC, PsbD, PsbE, PsbF, PsbH, PsbI, PsbJ, PsbK, PsbL, PsbM, PsbT, PsbX, PsbY, PsbZ, Psb30/Ycf12, peripheral proteins of the oxygen-evolving complex and a large number of cofactors. It forms dimeric complexes.

It is found in the plastid. It localises to the chloroplast thylakoid membrane. Its function is as follows. A core subunit of photosystem II (PSII), probably helps stabilize the reaction center. This chain is Photosystem II reaction center protein Psb30, found in Ostreococcus tauri.